A 498-amino-acid polypeptide reads, in one-letter code: ATP synthase subunit beta, chloroplastic (498 aa).

An ATP-binding site is contributed by 172-179; sequence GGAGVGKT.

The protein belongs to the ATPase alpha/beta chains family. F-type ATPases have 2 components, CF(1) - the catalytic core - and CF(0) - the membrane proton channel. CF(1) has five subunits: alpha(3), beta(3), gamma(1), delta(1), epsilon(1). CF(0) has four main subunits: a(1), b(1), b'(1) and c(9-12).

The protein localises to the plastid. Its subcellular location is the chloroplast thylakoid membrane. The enzyme catalyses ATP + H2O + 4 H(+)(in) = ADP + phosphate + 5 H(+)(out). Produces ATP from ADP in the presence of a proton gradient across the membrane. The catalytic sites are hosted primarily by the beta subunits. This is ATP synthase subunit beta, chloroplastic from Panax ginseng (Korean ginseng).